Consider the following 392-residue polypeptide: Na(+)/H(+) antiporter NhaA 2 (392 aa).

11 helical membrane-spanning segments follow: residues 20–40 (FFAAESAGGLVLMAAALAALI), 61–81 (LSVSHWINDGLMAIFFMLVGL), 99–119 (ALPGFAALGGMLVPALIYVAF), 127–147 (IGGWAIPAATDIAFALGVLSL), 158–178 (IFLSALAILDDLGAVLIIALF), 181–201 (SDLSIPMLLAALGSIAMLVAL), 209–229 (LLPYLIVGALLWFFMLQSGIH), 265–285 (VAFAVVPIFGFANAGVSLSGI), 298–318 (VALGLLVGKQVGIFAMAALAI), 336–356 (GVAALCGIGFTMSLFIGALAF), and 365–385 (EVKVGVLIGSVLSAVLGVVVL).

Belongs to the NhaA Na(+)/H(+) (TC 2.A.33) antiporter family.

Its subcellular location is the cell inner membrane. It carries out the reaction Na(+)(in) + 2 H(+)(out) = Na(+)(out) + 2 H(+)(in). Its function is as follows. Na(+)/H(+) antiporter that extrudes sodium in exchange for external protons. In Pseudomonas syringae pv. syringae (strain B728a), this protein is Na(+)/H(+) antiporter NhaA 2.